The following is a 232-amino-acid chain: 5'-methylthioadenosine/S-adenosylhomocysteine nucleosidase (232 aa).

Glu12 (proton acceptor) is an active-site residue. Residues Gly78, Val152, and 173–174 (ME) contribute to the substrate site. Asp197 serves as the catalytic Proton donor.

The protein belongs to the PNP/UDP phosphorylase family. MtnN subfamily. Homodimer.

It carries out the reaction S-adenosyl-L-homocysteine + H2O = S-(5-deoxy-D-ribos-5-yl)-L-homocysteine + adenine. The catalysed reaction is S-methyl-5'-thioadenosine + H2O = 5-(methylsulfanyl)-D-ribose + adenine. It catalyses the reaction 5'-deoxyadenosine + H2O = 5-deoxy-D-ribose + adenine. Its pathway is amino-acid biosynthesis; L-methionine biosynthesis via salvage pathway; S-methyl-5-thio-alpha-D-ribose 1-phosphate from S-methyl-5'-thioadenosine (hydrolase route): step 1/2. In terms of biological role, catalyzes the irreversible cleavage of the glycosidic bond in both 5'-methylthioadenosine (MTA) and S-adenosylhomocysteine (SAH/AdoHcy) to adenine and the corresponding thioribose, 5'-methylthioribose and S-ribosylhomocysteine, respectively. Also cleaves 5'-deoxyadenosine, a toxic by-product of radical S-adenosylmethionine (SAM) enzymes, into 5-deoxyribose and adenine. Thus, is required for in vivo function of the radical SAM enzymes biotin synthase and lipoic acid synthase, that are inhibited by 5'-deoxyadenosine accumulation. This Buchnera aphidicola subsp. Acyrthosiphon pisum (strain APS) (Acyrthosiphon pisum symbiotic bacterium) protein is 5'-methylthioadenosine/S-adenosylhomocysteine nucleosidase.